Consider the following 334-residue polypeptide: Putative binding protein YtlA (334 aa).

An N-terminal signal peptide occupies residues 1 to 23; it reads MNRWLRLGFACVGSIFLMFALAA. Cys-24 carries N-palmitoyl cysteine lipidation. A lipid anchor (S-diacylglycerol cysteine) is attached at Cys-24.

It belongs to the bacterial solute-binding protein SsuA/TauA family.

The protein localises to the cell membrane. This Bacillus subtilis (strain 168) protein is Putative binding protein YtlA (ytlA).